The primary structure comprises 254 residues: Leucyl/phenylalanyl-tRNA--protein transferase (254 aa).

The protein belongs to the L/F-transferase family.

The protein resides in the cytoplasm. The catalysed reaction is N-terminal L-lysyl-[protein] + L-leucyl-tRNA(Leu) = N-terminal L-leucyl-L-lysyl-[protein] + tRNA(Leu) + H(+). It catalyses the reaction N-terminal L-arginyl-[protein] + L-leucyl-tRNA(Leu) = N-terminal L-leucyl-L-arginyl-[protein] + tRNA(Leu) + H(+). The enzyme catalyses L-phenylalanyl-tRNA(Phe) + an N-terminal L-alpha-aminoacyl-[protein] = an N-terminal L-phenylalanyl-L-alpha-aminoacyl-[protein] + tRNA(Phe). Functionally, functions in the N-end rule pathway of protein degradation where it conjugates Leu, Phe and, less efficiently, Met from aminoacyl-tRNAs to the N-termini of proteins containing an N-terminal arginine or lysine. The chain is Leucyl/phenylalanyl-tRNA--protein transferase from Burkholderia cenocepacia (strain ATCC BAA-245 / DSM 16553 / LMG 16656 / NCTC 13227 / J2315 / CF5610) (Burkholderia cepacia (strain J2315)).